The chain runs to 814 residues: Lon protease (814 aa).

Positions 1–20 (MANEAHNIEHTDPEFRDDSA) are disordered. The 195-residue stretch at 25–219 (LPLLPVRDTV…KINQHLAKEL (195 aa)) folds into the Lon N-terminal domain. 372-379 (GPPGVGKT) contributes to the ATP binding site. The Lon proteolytic domain occupies 610–792 (TKRAGVVVGL…DEVLEIALPS (183 aa)). Residues Ser697 and Lys740 contribute to the active site.

The protein belongs to the peptidase S16 family. In terms of assembly, homohexamer. Organized in a ring with a central cavity.

It is found in the cytoplasm. It catalyses the reaction Hydrolysis of proteins in presence of ATP.. In terms of biological role, ATP-dependent serine protease that mediates the selective degradation of mutant and abnormal proteins as well as certain short-lived regulatory proteins. Required for cellular homeostasis and for survival from DNA damage and developmental changes induced by stress. Degrades polypeptides processively to yield small peptide fragments that are 5 to 10 amino acids long. Binds to DNA in a double-stranded, site-specific manner. This is Lon protease from Koribacter versatilis (strain Ellin345).